The following is a 393-amino-acid chain: Mitogen-activated protein kinase 10 (393 aa).

The Protein kinase domain occupies 60 to 345 (KPPIRPIGRG…VKEALAHPYL (286 aa)). ATP contacts are provided by residues 66–74 (IGRGACGIV) and lysine 89. The active-site Proton acceptor is aspartate 186. Threonine 218 carries the post-translational modification Phosphothreonine. Residues 218-220 (TEY) carry the TXY motif. The residue at position 220 (tyrosine 220) is a Phosphotyrosine. Residue threonine 223 is modified to Phosphothreonine.

This sequence belongs to the protein kinase superfamily. CMGC Ser/Thr protein kinase family. MAP kinase subfamily. Interacts with MKK2. Dually phosphorylated on Thr-218 and Tyr-220, which activates the enzyme.

It carries out the reaction L-seryl-[protein] + ATP = O-phospho-L-seryl-[protein] + ADP + H(+). The enzyme catalyses L-threonyl-[protein] + ATP = O-phospho-L-threonyl-[protein] + ADP + H(+). With respect to regulation, activated by threonine and tyrosine phosphorylation. This chain is Mitogen-activated protein kinase 10 (MPK10), found in Arabidopsis thaliana (Mouse-ear cress).